We begin with the raw amino-acid sequence, 135 residues long: Small ribosomal subunit protein uS8 (135 aa).

It belongs to the universal ribosomal protein uS8 family. In terms of assembly, part of the 30S ribosomal subunit. Contacts proteins S5 and S12.

Functionally, one of the primary rRNA binding proteins, it binds directly to 16S rRNA central domain where it helps coordinate assembly of the platform of the 30S subunit. The chain is Small ribosomal subunit protein uS8 from Parafrankia sp. (strain EAN1pec).